The primary structure comprises 315 residues: Kinetochore protein SPC25 homolog (315 aa).

Residue methionine 1 is modified to N-acetylmethionine. The stretch at threonine 57–arginine 91 forms a coiled coil. The tract at residues alanine 261–lysine 315 is disordered. Residues phenylalanine 266–proline 275 show a composition bias toward polar residues. The span at serine 280–lysine 289 shows a compositional bias: basic residues.

It belongs to the SPC25 family. In terms of assembly, component of the NDC80 complex, which consists of NDC80, NUF2, SPC24 and SPC25.

It is found in the chromosome. It localises to the centromere. Its function is as follows. Acts as a component of the essential kinetochore-associated NDC80 complex, which is required for chromosome segregation and spindle checkpoint activity to ensure proper cell division. The protein is Kinetochore protein SPC25 homolog of Arabidopsis thaliana (Mouse-ear cress).